A 977-amino-acid polypeptide reads, in one-letter code: RNA-binding protein 15 (977 aa).

Basic and acidic residues-rich tracts occupy residues 1-10 (MRTAGRDPVP), 35-52 (RGDDLRRPATMKGKERSP), 59-72 (RGGEDSTSRGERSK), and 98-113 (LHLDKSSSRGGSREYD). The segment at 1–167 (MRTAGRDPVP…SSAPGGGDGA (167 aa)) is disordered. Serine 109 bears the Phosphoserine mark. Positions 119 to 130 (SSSRLHSYSSPS) are enriched in low complexity. A compositionally biased stretch (gly residues) spans 135 to 150 (SGGGESRSSSRGGGGE). Over residues 151–160 (SRSSGAASSA) the composition is skewed to low complexity. The 83-residue stretch at 170–252 (KTLKISELGS…RPLKIEAVYV (83 aa)) folds into the RRM 1 domain. Phosphoserine occurs at positions 179, 208, and 210. Lysine 246 participates in a covalent cross-link: Glycyl lysine isopeptide (Lys-Gly) (interchain with G-Cter in SUMO2). Phosphoserine occurs at positions 253, 257, and 259. The interval 256-298 (RSRSPLDKDTYPPSASVVGASVGGHRHPPGGGGGQRSLSPGGA) is disordered. Tyrosine 266 is modified (phosphotyrosine). A phosphoserine mark is found at serine 292, serine 294, and serine 365. 2 RRM domains span residues 374–451 (RTLF…YGKA) and 455–529 (TRLW…FADT). Glycyl lysine isopeptide (Lys-Gly) (interchain with G-Cter in SUMO2) cross-links involve residues lysine 406, lysine 420, and lysine 445. An N6-acetyllysine modification is found at lysine 450. 2 stretches are compositionally biased toward basic and acidic residues: residues 555–581 (HRAPDPLRGARDRTPPLLYRDRDRDLY) and 613–661 (SLDR…ESDR). The interval 555 to 778 (HRAPDPLRGA…KQDGGTAPVA (224 aa)) is disordered. Threonine 568 carries the post-translational modification Phosphothreonine. Position 578 is an asymmetric dimethylarginine; alternate; by PRMT1 (arginine 578). An Omega-N-methylarginine; alternate; by PRMT1 modification is found at arginine 578. Phosphoserine occurs at positions 622, 656, 670, 674, 700, and 741. 2 stretches are compositionally biased toward basic and acidic residues: residues 673–728 (RSPE…AERD) and 741–750 (SPLKKEDRSD). Residue lysine 744 forms a Glycyl lysine isopeptide (Lys-Gly) (interchain with G-Cter in SUMO2) linkage. Polar residues predominate over residues 752–771 (SAPSTSTASSKLKSPSQKQD). Serine 765, serine 767, and serine 781 each carry phosphoserine. Positions 777–956 (VASASPKLCL…YLVMIIVRGF (180 aa)) constitute an SPOC domain. Residues 865–884 (GSSDSRSSSSSAASDTATST) form a disordered region. Positions 866–884 (SSDSRSSSSSAASDTATST) are enriched in low complexity. Serine 935 carries the phosphoserine modification.

Belongs to the RRM Spen family. In terms of assembly, component of the WMM complex, a N6-methyltransferase complex composed of a catalytic subcomplex, named MAC, and of an associated subcomplex, named MACOM. The MAC subcomplex is composed of METTL3 and METTL14. The MACOM subcomplex is composed of WTAP, ZC3H13, CBLL1/HAKAI, VIRMA, and, in some cases of RBM15 (RBM15 or RBM15B). Also a component of a MACOM-like complex, named WTAP complex, composed of WTAP, ZC3H13, CBLL1, VIRMA, RBM15, BCLAF1 and THRAP3. Interacts with RBPJ. Interacts (via SPOC domain) with SETD1B. Interacts with NXF1, the interaction is required to promote mRNA export. Interacts with SF3B1. (Microbial infection) Interacts with Epstein-Barr virus BSFL2/BMLF1. In terms of processing, methylated at Arg-578 by PRMT1, leading to promote ubiquitination by CNOT4 and subsequent degradation by the proteasome. Post-translationally, ubiquitinated by CNOT4 following methylation at Arg-578 by PRMT1.

It localises to the nucleus speckle. It is found in the nucleus. Its subcellular location is the nucleoplasm. The protein resides in the nucleus envelope. The protein localises to the nucleus membrane. Functionally, RNA-binding protein that acts as a key regulator of N6-methyladenosine (m6A) methylation of RNAs, thereby regulating different processes, such as hematopoietic cell homeostasis, alternative splicing of mRNAs and X chromosome inactivation mediated by Xist RNA. Associated component of the WMM complex, a complex that mediates N6-methyladenosine (m6A) methylation of RNAs, a modification that plays a role in the efficiency of mRNA splicing and RNA processing. Plays a key role in m6A methylation, possibly by binding target RNAs and recruiting the WMM complex. Involved in random X inactivation mediated by Xist RNA: acts by binding Xist RNA and recruiting the WMM complex, which mediates m6A methylation, leading to target YTHDC1 reader on Xist RNA and promoting transcription repression activity of Xist. Required for the development of multiple tissues, such as the maintenance of the homeostasis of long-term hematopoietic stem cells and for megakaryocyte (MK) and B-cell differentiation. Regulates megakaryocyte differentiation by regulating alternative splicing of genes important for megakaryocyte differentiation; probably regulates alternative splicing via m6A regulation. Required for placental vascular branching morphogenesis and embryonic development of the heart and spleen. Acts as a regulator of thrombopoietin response in hematopoietic stem cells by regulating alternative splicing of MPL. May also function as an mRNA export factor, stimulating export and expression of RTE-containing mRNAs which are present in many retrotransposons that require to be exported prior to splicing. High affinity binding of pre-mRNA to RBM15 may allow targeting of the mRNP to the export helicase DBP5 in a manner that is independent of splicing-mediated NXF1 deposition, resulting in export prior to splicing. May be implicated in HOX gene regulation. This Homo sapiens (Human) protein is RNA-binding protein 15.